The primary structure comprises 786 residues: Leucine-rich repeat extensin-like protein 2 (786 aa).

Positions Met1–Gly28 are cleaved as a signal peptide. 2 N-linked (GlcNAc...) asparagine glycosylation sites follow: Asn73 and Asn79. LRR repeat units lie at residues Thr100–Leu124, Thr125–His147, Lys149–Leu172, Pro173–Lys196, Leu198–Ser219, Val221–Gly243, Lys244–Leu267, Lys268–Met291, and Lys292–Leu315. Asn255 and Asn269 each carry an N-linked (GlcNAc...) asparagine glycan. Asn320 and Asn346 each carry an N-linked (GlcNAc...) asparagine glycan. 4 disordered regions span residues Ile352–Val372, Phe390–Val589, Pro624–Pro645, and Pro694–Tyr786. The span at Asp353–Lys362 shows a compositional bias: basic and acidic residues. The contains the Ser-Pro(4) repeats stretch occupies residues Ser384–Tyr786. Pro residues-rich tracts occupy residues Tyr460–Ser477, Tyr487–Lys542, and Ser566–Val589. 4 stretches are compositionally biased toward pro residues: residues Pro694–Thr713, Pro720–Lys737, Pro752–Pro769, and Ser777–Tyr786.

In terms of processing, hydroxylated on proline residues in the S-P-P-P-P repeat. Post-translationally, O-glycosylated on hydroxyprolines. As to expression, mostly expressed in roots, also present in stems at low levels. In roots, confined to differentiation zones, the collet, and meristematic cells of tips.

The protein localises to the secreted. It localises to the cell wall. In terms of biological role, modulates cell morphogenesis by regulating cell wall formation and assembly, and/or growth polarization. Together with LRX2, component of the extracellular mechanism regulating root hair morphogenesis and elongation. The polypeptide is Leucine-rich repeat extensin-like protein 2 (LRX2) (Arabidopsis thaliana (Mouse-ear cress)).